Reading from the N-terminus, the 125-residue chain is Small ribosomal subunit protein eS8 (125 aa).

It belongs to the eukaryotic ribosomal protein eS8 family. Part of the 30S ribosomal subunit.

The polypeptide is Small ribosomal subunit protein eS8 (Methanosarcina mazei (strain ATCC BAA-159 / DSM 3647 / Goe1 / Go1 / JCM 11833 / OCM 88) (Methanosarcina frisia)).